The sequence spans 98 residues: NADH-ubiquinone oxidoreductase chain 4L (98 aa).

Transmembrane regions (helical) follow at residues 2 to 22 (PSIS…MLMF), 29 to 49 (SLLC…LTIL), and 61 to 81 (ILLL…LVMV).

Belongs to the complex I subunit 4L family. As to quaternary structure, core subunit of respiratory chain NADH dehydrogenase (Complex I) which is composed of 45 different subunits.

The protein localises to the mitochondrion inner membrane. It catalyses the reaction a ubiquinone + NADH + 5 H(+)(in) = a ubiquinol + NAD(+) + 4 H(+)(out). Core subunit of the mitochondrial membrane respiratory chain NADH dehydrogenase (Complex I) which catalyzes electron transfer from NADH through the respiratory chain, using ubiquinone as an electron acceptor. Part of the enzyme membrane arm which is embedded in the lipid bilayer and involved in proton translocation. The chain is NADH-ubiquinone oxidoreductase chain 4L (MT-ND4L) from Microcebus mittermeieri (Mittermeier's mouse lemur).